A 382-amino-acid chain; its full sequence is Osmoprotectant import ATP-binding protein OsmV (382 aa).

Positions 2 to 241 (IKLENLTKQF…PANEFVGSFV (240 aa)) constitute an ABC transporter domain. 39–46 (GPSGCGKT) is an ATP binding site. CBS domains follow at residues 258–320 (VTDQ…THPF) and 322–373 (ITGK…GRTR).

This sequence belongs to the ABC transporter superfamily. In terms of assembly, the complex is composed of two ATP-binding proteins (OsmV), two transmembrane proteins (OsmW and OsmY) and a solute-binding protein (OsmX).

The protein localises to the cell inner membrane. Part of the OsmU ABC transporter complex, which is involved in the uptake of osmoprotectants such as choline-O-sulfate and glycine betaine. Probably responsible for energy coupling to the transport system. This Salmonella typhimurium (strain LT2 / SGSC1412 / ATCC 700720) protein is Osmoprotectant import ATP-binding protein OsmV (osmV).